The chain runs to 367 residues: Terpene cyclase verU1 (367 aa).

Residues Ile-8–Phe-28 traverse the membrane as a helical segment. Residue Asn-50 is glycosylated (N-linked (GlcNAc...) asparagine). 8 helical membrane passes run Phe-57 to Val-77, Leu-85 to Leu-105, Met-120 to Cys-140, Cys-169 to Val-189, Ile-197 to Leu-217, Ile-239 to Ala-259, Phe-292 to Ile-312, and Leu-327 to Tyr-347. Asn-352 carries an N-linked (GlcNAc...) asparagine glycan.

This sequence belongs to the membrane-bound ascI terpene cyclase family.

Its subcellular location is the membrane. Its pathway is secondary metabolite biosynthesis; terpenoid biosynthesis. It functions in the pathway mycotoxin biosynthesis. Terpene cyclase; part of the gene cluster that mediates the biosynthesis of the neurotoxin verrucosidin, a methylated alpha-pyrone polyketide that inhibits oxidative phosphorylation in mitochondria and thereby causes neurological diseases. The carbon backbone of verrucosidin is synthesized by the HR-PKS verA, and further modified by the other verrucodidin cluster enzymes. This chain is Terpene cyclase verU1, found in Penicillium polonicum.